A 472-amino-acid chain; its full sequence is Serine/threonine-protein phosphatase T (472 aa).

3 TPR repeats span residues Ala-7–Pro-40, Thr-41–Phe-73, and Ala-74–Asn-107. The Mn(2+) site is built by Asp-217, His-219, Asp-246, and Asn-278. His-279 serves as the catalytic Proton donor/acceptor. 2 residues coordinate Mn(2+): His-327 and His-403.

Belongs to the PPP phosphatase family. PP-5 (PP-T) subfamily. Requires Mg(2+) as cofactor. Mn(2+) serves as cofactor.

It is found in the cytoplasm. Its subcellular location is the cytosol. It localises to the nucleus. The enzyme catalyses O-phospho-L-seryl-[protein] + H2O = L-seryl-[protein] + phosphate. It catalyses the reaction O-phospho-L-threonyl-[protein] + H2O = L-threonyl-[protein] + phosphate. Its activity is regulated as follows. Activated by arachidonic acid. May function as a protein phosphatase. The chain is Serine/threonine-protein phosphatase T from Trypanosoma brucei brucei (strain 927/4 GUTat10.1).